Consider the following 283-residue polypeptide: MPCYFWDCWPSLEIRAVLCAMGCIQSIGGKARVFREGITVIDVKASIDPIPTSIDESSSVVLRYRTPHFRASAQVVMPPIPKKETWIVGWIQACSHMEFYNQYGEQGMSSWELPDLQEGKIEAISDSDGVNYPWYGNTTETCTIVGPTKRDSKFIISMNDNFYPSVTWAVPVSESNVAKLTNIYRDQSFTTWLVATNTSTNDMIILQTLHWRMQLSIEVNPNRPLGQRARLREPIAQDQPKILSKNEPIPPSALVKPNANDAQVLMWRPKYGQPLVVIPPKHR.

Belongs to the FAM78 family.

The sequence is that of Protein FAM78A (Fam78a) from Mus musculus (Mouse).